The following is a 112-amino-acid chain: Urease subunit gamma (112 aa).

Belongs to the urease gamma subunit family. In terms of assembly, heterotrimer of UreA (gamma), UreB (beta) and UreC (alpha) subunits. Three heterotrimers associate to form the active enzyme.

It localises to the cytoplasm. The enzyme catalyses urea + 2 H2O + H(+) = hydrogencarbonate + 2 NH4(+). It participates in nitrogen metabolism; urea degradation; CO(2) and NH(3) from urea (urease route): step 1/1. The polypeptide is Urease subunit gamma (Gloeothece citriformis (strain PCC 7424) (Cyanothece sp. (strain PCC 7424))).